Here is a 219-residue protein sequence, read N- to C-terminus: Large ribosomal subunit protein eL13 (219 aa).

Residues 198-219 form a disordered region; that stretch reads KDAAENPDDVTKAPTAVKRNKT.

This sequence belongs to the eukaryotic ribosomal protein eL13 family. Component of the 60S large ribosomal subunit (LSU).

The protein localises to the cytoplasm. Component of the ribosome, a large ribonucleoprotein complex responsible for the synthesis of proteins in the cell. The small ribosomal subunit (SSU) binds messenger RNAs (mRNAs) and translates the encoded message by selecting cognate aminoacyl-transfer RNA (tRNA) molecules. The large subunit (LSU) contains the ribosomal catalytic site termed the peptidyl transferase center (PTC), which catalyzes the formation of peptide bonds, thereby polymerizing the amino acids delivered by tRNAs into a polypeptide chain. The nascent polypeptides leave the ribosome through a tunnel in the LSU and interact with protein factors that function in enzymatic processing, targeting, and the membrane insertion of nascent chains at the exit of the ribosomal tunnel. As part of the LSU, it is probably required for its formation and the maturation of rRNAs. This chain is Large ribosomal subunit protein eL13 (RpL13), found in Spodoptera frugiperda (Fall armyworm).